The sequence spans 505 residues: Maturase K (505 aa).

This sequence belongs to the intron maturase 2 family. MatK subfamily.

It localises to the plastid. Its subcellular location is the chloroplast. In terms of biological role, usually encoded in the trnK tRNA gene intron. Probably assists in splicing its own and other chloroplast group II introns. This chain is Maturase K, found in Physcomitrium patens (Spreading-leaved earth moss).